Reading from the N-terminus, the 100-residue chain is Small ribosomal subunit protein eS24 (100 aa).

The protein belongs to the eukaryotic ribosomal protein eS24 family.

The protein is Small ribosomal subunit protein eS24 of Methanothermobacter thermautotrophicus (strain ATCC 29096 / DSM 1053 / JCM 10044 / NBRC 100330 / Delta H) (Methanobacterium thermoautotrophicum).